Consider the following 636-residue polypeptide: Bifunctional phosphonoacetaldehyde hydrolase/aminoethylphosphonate transaminase (636 aa).

Residues 1 to 276 form a phosphonoacetaldehyde hydrolase region; the sequence is MKKIYGEKIK…IKSDFVPEND (276 aa). The active-site Nucleophile is the aspartate 15. Aspartate 15 and alanine 17 together coordinate Mg(2+). The active-site Schiff-base intermediate with substrate is the lysine 56. Aspartate 189 serves as a coordination point for Mg(2+). The interval 277–636 is 2-aminoethylphosphonate--pyruvate transaminase; sequence YILLTPGPLS…ADVIEKFINR (360 aa). Lysine 465 is subject to N6-(pyridoxal phosphate)lysine.

The protein in the N-terminal section; belongs to the HAD-like hydrolase superfamily. PhnX family. In the C-terminal section; belongs to the class-V pyridoxal-phosphate-dependent aminotransferase family. PhnW subfamily. In terms of assembly, homodimer. Mg(2+) serves as cofactor. The cofactor is pyridoxal 5'-phosphate.

The enzyme catalyses (2-aminoethyl)phosphonate + pyruvate = phosphonoacetaldehyde + L-alanine. The catalysed reaction is phosphonoacetaldehyde + H2O = acetaldehyde + phosphate + H(+). In terms of biological role, involved in phosphonate degradation. This chain is Bifunctional phosphonoacetaldehyde hydrolase/aminoethylphosphonate transaminase (phnXW), found in Clostridioides difficile (strain 630) (Peptoclostridium difficile).